The following is a 372-amino-acid chain: Chaperone protein DnaJ (372 aa).

The region spanning 5–70 (DYYDLLEVGR…EKRAGYDRYG (66 aa)) is the J domain. Residues 134–212 (GIQAPIHYVT…CGGSGRRRDE (79 aa)) form a CR-type zinc finger. 8 residues coordinate Zn(2+): C147, C150, C164, C167, C186, C189, C200, and C203. CXXCXGXG motif repeat units lie at residues 147–154 (CDTCQGTG), 164–171 (CHTCQGSG), 186–193 (CTTCYGEG), and 200–207 (CKKCGGSG).

It belongs to the DnaJ family. As to quaternary structure, homodimer. Zn(2+) is required as a cofactor.

The protein localises to the cytoplasm. In terms of biological role, participates actively in the response to hyperosmotic and heat shock by preventing the aggregation of stress-denatured proteins and by disaggregating proteins, also in an autonomous, DnaK-independent fashion. Unfolded proteins bind initially to DnaJ; upon interaction with the DnaJ-bound protein, DnaK hydrolyzes its bound ATP, resulting in the formation of a stable complex. GrpE releases ADP from DnaK; ATP binding to DnaK triggers the release of the substrate protein, thus completing the reaction cycle. Several rounds of ATP-dependent interactions between DnaJ, DnaK and GrpE are required for fully efficient folding. Also involved, together with DnaK and GrpE, in the DNA replication of plasmids through activation of initiation proteins. This chain is Chaperone protein DnaJ, found in Wolbachia sp. subsp. Drosophila simulans (strain wRi).